Reading from the N-terminus, the 179-residue chain is MESESVPTVPQTTRPGPRCYNCGENGHQARECTKGSICYNCNQTGHKASECTEPQQEKTCYACGTAGHLVRDCPSSPNPRQGAECYKCGRVGHIARDCRTNGQQSGGRFGGHRSNMNCYACGSYGHQARDCTMGVKCYSCGKIGHRSFECQQASDGQLCYKCNQPGHIAVNCTSPVIEA.

7 CCHC-type zinc fingers span residues 17–34 (PRCYNCGENGHQARECTK), 36–53 (SICYNCNQTGHKASECTE), 58–75 (KTCYACGTAGHLVRDCPS), 83–100 (AECYKCGRVGHIARDCRT), 116–133 (MNCYACGSYGHQARDCTM), 135–152 (VKCYSCGKIGHRSFECQQ), and 157–174 (QLCYKCNQPGHIAVNCTS).

This sequence to human CNBP and to retroviral nucleic acid binding proteins (NBP). Post-translationally, phosphorylated.

The protein resides in the nucleus. Its function is as follows. Acts in the sexual differentiation pathway. Is required for efficient conjugation. Double-stranded DNA-binding protein. The protein is Cellular nucleic acid-binding protein homolog (byr3) of Schizosaccharomyces pombe (strain 972 / ATCC 24843) (Fission yeast).